The following is a 685-amino-acid chain: Protein hook (685 aa).

In terms of domain architecture, Calponin-homology (CH) spans 6–122; that stretch reads MEIYESLIRW…RLLQLILGCA (117 aa). Residues 134-570 adopt a coiled-coil conformation; it reads QIMELEESLQ…LLAADSRYKK (437 aa). Disordered stretches follow at residues 430–449, 593–625, and 661–685; these read AAED…SSDV, LEKP…SGRV, and PGQS…FAKK. Residues 602 to 623 show a composition bias toward low complexity; sequence ASSSSATGSGGDASTLTSTGSG. The span at 661-670 shows a compositional bias: polar residues; it reads PGQSFLSRQR.

This sequence belongs to the hook family. As to quaternary structure, homodimer. Interacts with microtubules via its N-terminus.

The protein localises to the cytoplasm. The protein resides in the cytoskeleton. It is found in the endosome. Its function is as follows. Involved in endocytic trafficking. Probably acts as a cytoskeletal linker protein that tethers endosome vesicles to the cytoskeleton. The chain is Protein hook from Aedes aegypti (Yellowfever mosquito).